The chain runs to 478 residues: Glutamate--tRNA ligase (478 aa).

The 'HIGH' region signature appears at 23–33 (PSPTGFIHLGN). A compositionally biased stretch (basic and acidic residues) spans 130 to 145 (KQKPRYDGTWRPEEGK). The interval 130–153 (KQKPRYDGTWRPEEGKTLPPVPEG) is disordered. The 'KMSKS' region signature appears at 255-259 (KMSKR). Residue lysine 258 coordinates ATP.

Belongs to the class-I aminoacyl-tRNA synthetase family. Glutamate--tRNA ligase type 1 subfamily. In terms of assembly, monomer.

It is found in the cytoplasm. It catalyses the reaction tRNA(Glu) + L-glutamate + ATP = L-glutamyl-tRNA(Glu) + AMP + diphosphate. Catalyzes the attachment of glutamate to tRNA(Glu) in a two-step reaction: glutamate is first activated by ATP to form Glu-AMP and then transferred to the acceptor end of tRNA(Glu). The protein is Glutamate--tRNA ligase of Paracidovorax citrulli (strain AAC00-1) (Acidovorax citrulli).